A 398-amino-acid chain; its full sequence is UDP-N-acetylglucosamine--N-acetylmuramyl-(pentapeptide) pyrophosphoryl-undecaprenol N-acetylglucosamine transferase (398 aa).

Residues 11-13 (TGG), Asn124, Arg164, Ser192, and Gln318 each bind UDP-N-acetyl-alpha-D-glucosamine.

This sequence belongs to the glycosyltransferase 28 family. MurG subfamily.

The protein resides in the cell membrane. It carries out the reaction di-trans,octa-cis-undecaprenyl diphospho-N-acetyl-alpha-D-muramoyl-L-alanyl-D-glutamyl-meso-2,6-diaminopimeloyl-D-alanyl-D-alanine + UDP-N-acetyl-alpha-D-glucosamine = di-trans,octa-cis-undecaprenyl diphospho-[N-acetyl-alpha-D-glucosaminyl-(1-&gt;4)]-N-acetyl-alpha-D-muramoyl-L-alanyl-D-glutamyl-meso-2,6-diaminopimeloyl-D-alanyl-D-alanine + UDP + H(+). Its pathway is cell wall biogenesis; peptidoglycan biosynthesis. Cell wall formation. Catalyzes the transfer of a GlcNAc subunit on undecaprenyl-pyrophosphoryl-MurNAc-pentapeptide (lipid intermediate I) to form undecaprenyl-pyrophosphoryl-MurNAc-(pentapeptide)GlcNAc (lipid intermediate II). The chain is UDP-N-acetylglucosamine--N-acetylmuramyl-(pentapeptide) pyrophosphoryl-undecaprenol N-acetylglucosamine transferase from Deinococcus radiodurans (strain ATCC 13939 / DSM 20539 / JCM 16871 / CCUG 27074 / LMG 4051 / NBRC 15346 / NCIMB 9279 / VKM B-1422 / R1).